The following is a 462-amino-acid chain: Jasmonoyl--L-amino acid synthetase GH3.3 (462 aa).

Serine 103 is an ATP binding site. Residue serine 106 coordinates jasmonate. ATP-binding positions include threonine 126, asparagine 172, and 337–342 (GASEGW). 170-174 (TTNVY) is a binding site for an L-alpha-amino acid. Jasmonate contacts are provided by residues 334–337 (AEYG) and serine 339.

The protein belongs to the IAA-amido conjugating enzyme family. In terms of tissue distribution, expressed in green shoots and flowers.

It carries out the reaction a jasmonate + an L-alpha-amino acid + ATP = a jasmonyl-L-amino acid + AMP + diphosphate + H(+). In terms of biological role, catalyzes the synthesis of jasmonate-amino acid conjugates by adenylation. Catalyzes the conjugation of jasmonate (JA) to Ile when expressed in a heterologous system (E.coli). Catalyzes in vitro the conjugation of jasmonate (JA) to Ile, Phe, Leu, Met, Val and Trp. May catalyze the synthesis of indole-3-acetic acid (IAA)-amino acid conjugates, providing a mechanism for the plant to cope with the presence of excess auxin. This Oryza sativa subsp. japonica (Rice) protein is Jasmonoyl--L-amino acid synthetase GH3.3.